A 241-amino-acid polypeptide reads, in one-letter code: NAD(P)H-quinone oxidoreductase subunit K (241 aa).

The [4Fe-4S] cluster site is built by cysteine 60, cysteine 61, cysteine 125, and cysteine 156. The disordered stretch occupies residues 220-241; that stretch reads SSQKEKITELPEKTEITNTEKD. Positions 222-241 are enriched in basic and acidic residues; sequence QKEKITELPEKTEITNTEKD.

Belongs to the complex I 20 kDa subunit family. NDH-1 can be composed of about 15 different subunits; different subcomplexes with different compositions have been identified which probably have different functions. [4Fe-4S] cluster is required as a cofactor.

Its subcellular location is the cellular thylakoid membrane. It carries out the reaction a plastoquinone + NADH + (n+1) H(+)(in) = a plastoquinol + NAD(+) + n H(+)(out). It catalyses the reaction a plastoquinone + NADPH + (n+1) H(+)(in) = a plastoquinol + NADP(+) + n H(+)(out). In terms of biological role, NDH-1 shuttles electrons from an unknown electron donor, via FMN and iron-sulfur (Fe-S) centers, to quinones in the respiratory and/or the photosynthetic chain. The immediate electron acceptor for the enzyme in this species is believed to be plastoquinone. Couples the redox reaction to proton translocation, and thus conserves the redox energy in a proton gradient. Cyanobacterial NDH-1 also plays a role in inorganic carbon-concentration. The protein is NAD(P)H-quinone oxidoreductase subunit K of Prochlorococcus marinus (strain MIT 9215).